A 311-amino-acid chain; its full sequence is Ribonuclease Z (311 aa).

Zn(2+) is bound by residues His61, His63, Asp65, His66, His137, Asp207, and His263. The active-site Proton acceptor is Asp65.

This sequence belongs to the RNase Z family. As to quaternary structure, homodimer. Zn(2+) serves as cofactor.

It carries out the reaction Endonucleolytic cleavage of RNA, removing extra 3' nucleotides from tRNA precursor, generating 3' termini of tRNAs. A 3'-hydroxy group is left at the tRNA terminus and a 5'-phosphoryl group is left at the trailer molecule.. Its function is as follows. Zinc phosphodiesterase, which displays some tRNA 3'-processing endonuclease activity. Probably involved in tRNA maturation, by removing a 3'-trailer from precursor tRNA. This chain is Ribonuclease Z, found in Thermococcus onnurineus (strain NA1).